We begin with the raw amino-acid sequence, 279 residues long: Tryptophan synthase alpha chain (279 aa).

Catalysis depends on proton acceptor residues Glu-50 and Asp-61.

Belongs to the TrpA family. In terms of assembly, tetramer of two alpha and two beta chains.

The enzyme catalyses (1S,2R)-1-C-(indol-3-yl)glycerol 3-phosphate + L-serine = D-glyceraldehyde 3-phosphate + L-tryptophan + H2O. It functions in the pathway amino-acid biosynthesis; L-tryptophan biosynthesis; L-tryptophan from chorismate: step 5/5. Its function is as follows. The alpha subunit is responsible for the aldol cleavage of indoleglycerol phosphate to indole and glyceraldehyde 3-phosphate. The polypeptide is Tryptophan synthase alpha chain (Azorhizobium caulinodans (strain ATCC 43989 / DSM 5975 / JCM 20966 / LMG 6465 / NBRC 14845 / NCIMB 13405 / ORS 571)).